Consider the following 181-residue polypeptide: Ribulose bisphosphate carboxylase small subunit, chloroplastic (181 aa).

Residues 1 to 56 constitute a chloroplast transit peptide; that stretch reads MASISSSAIATVNRTTSTQASLAAPFTGLKSNVAFPVTKKANNDFSSLPSNGGRVQ.

Belongs to the RuBisCO small chain family. Heterohexadecamer of 8 large and 8 small subunits.

It localises to the plastid. It is found in the chloroplast. Its function is as follows. RuBisCO catalyzes two reactions: the carboxylation of D-ribulose 1,5-bisphosphate, the primary event in carbon dioxide fixation, as well as the oxidative fragmentation of the pentose substrate. Both reactions occur simultaneously and in competition at the same active site. Although the small subunit is not catalytic it is essential for maximal activity. In Lactuca sativa (Garden lettuce), this protein is Ribulose bisphosphate carboxylase small subunit, chloroplastic.